The chain runs to 179 residues: Large ribosomal subunit protein uL5 (179 aa).

The protein belongs to the universal ribosomal protein uL5 family. As to quaternary structure, part of the 50S ribosomal subunit; part of the 5S rRNA/L5/L18/L25 subcomplex. Contacts the 5S rRNA and the P site tRNA. Forms a bridge to the 30S subunit in the 70S ribosome.

Its function is as follows. This is one of the proteins that bind and probably mediate the attachment of the 5S RNA into the large ribosomal subunit, where it forms part of the central protuberance. In the 70S ribosome it contacts protein S13 of the 30S subunit (bridge B1b), connecting the 2 subunits; this bridge is implicated in subunit movement. Contacts the P site tRNA; the 5S rRNA and some of its associated proteins might help stabilize positioning of ribosome-bound tRNAs. In Bordetella petrii (strain ATCC BAA-461 / DSM 12804 / CCUG 43448), this protein is Large ribosomal subunit protein uL5.